The following is a 325-amino-acid chain: Glycerol-3-phosphate dehydrogenase [NAD(P)+] (325 aa).

Positions 14, 15, 35, and 109 each coordinate NADPH. Sn-glycerol 3-phosphate-binding residues include K109 and G137. A141 contacts NADPH. Sn-glycerol 3-phosphate contacts are provided by K192, D247, S257, R258, and N259. The active-site Proton acceptor is K192. R258 is an NADPH binding site. NADPH is bound by residues L282 and E284.

The protein belongs to the NAD-dependent glycerol-3-phosphate dehydrogenase family.

Its subcellular location is the cytoplasm. It carries out the reaction sn-glycerol 3-phosphate + NAD(+) = dihydroxyacetone phosphate + NADH + H(+). The catalysed reaction is sn-glycerol 3-phosphate + NADP(+) = dihydroxyacetone phosphate + NADPH + H(+). It participates in membrane lipid metabolism; glycerophospholipid metabolism. Its function is as follows. Catalyzes the reduction of the glycolytic intermediate dihydroxyacetone phosphate (DHAP) to sn-glycerol 3-phosphate (G3P), the key precursor for phospholipid synthesis. The chain is Glycerol-3-phosphate dehydrogenase [NAD(P)+] from Rickettsia africae (strain ESF-5).